The sequence spans 292 residues: MSPAFHPLRTRVGEAIEQSLFRRTDPVPPPRPSGAVTLRADGIAVTRGGRPVLDDVSVDVRIGEVLVLVGPNGAGKSTLLAALSGDQDVHTGTVHLDDRDLGEWTALEMAQRRAVLPQQNTVGFSFTARQVITMGRSPWARTPRSDDDAVAIAEAMRICDVVAFADRPFTALSGGERARVALARVLAQRTETILLDEPTAALDLGHQETVMRLARSRAEQGTAVVVVLHDLALAAAYADRIVVLEQGRVAANGPPADVLSEELLTRVYGHPVEVIEHPVTGATLVLPRRDQR.

Residues 38-271 (LRADGIAVTR…ELLTRVYGHP (234 aa)) enclose the ABC transporter domain. Residue 70–77 (GPNGAGKS) coordinates ATP.

Belongs to the ABC transporter superfamily. Heme (hemin) importer (TC 3.A.1.14.5) family. As to quaternary structure, the complex is composed of two ATP-binding proteins (HmuV), two transmembrane proteins (HmuU) and a solute-binding protein (HmuT).

It localises to the cell membrane. Functionally, part of the ABC transporter complex HmuTUV involved in hemin import. Responsible for energy coupling to the transport system. The sequence is that of Hemin import ATP-binding protein HmuV from Rhodococcus jostii (strain RHA1).